An 89-amino-acid polypeptide reads, in one-letter code: Small ribosomal subunit protein uS15 (89 aa).

Belongs to the universal ribosomal protein uS15 family. Part of the 30S ribosomal subunit. Forms a bridge to the 50S subunit in the 70S ribosome, contacting the 23S rRNA.

Functionally, one of the primary rRNA binding proteins, it binds directly to 16S rRNA where it helps nucleate assembly of the platform of the 30S subunit by binding and bridging several RNA helices of the 16S rRNA. Forms an intersubunit bridge (bridge B4) with the 23S rRNA of the 50S subunit in the ribosome. The polypeptide is Small ribosomal subunit protein uS15 (Streptococcus agalactiae serotype Ia (strain ATCC 27591 / A909 / CDC SS700)).